Reading from the N-terminus, the 431-residue chain is Glutamate--tRNA ligase 1 (431 aa).

Positions 6-16 match the 'HIGH' region motif; it reads PSPTGDMHIGN. Residues 235–239 carry the 'KMSKS' region motif; it reads KMSKR. Residue lysine 238 coordinates ATP.

It belongs to the class-I aminoacyl-tRNA synthetase family. Glutamate--tRNA ligase type 1 subfamily. As to quaternary structure, monomer.

It is found in the cytoplasm. It carries out the reaction tRNA(Glu) + L-glutamate + ATP = L-glutamyl-tRNA(Glu) + AMP + diphosphate. In terms of biological role, catalyzes the attachment of glutamate to tRNA(Glu) in a two-step reaction: glutamate is first activated by ATP to form Glu-AMP and then transferred to the acceptor end of tRNA(Glu). The chain is Glutamate--tRNA ligase 1 from Campylobacter jejuni subsp. jejuni serotype O:2 (strain ATCC 700819 / NCTC 11168).